We begin with the raw amino-acid sequence, 185 residues long: Ribosome-recycling factor (185 aa).

This sequence belongs to the RRF family.

The protein localises to the cytoplasm. Functionally, responsible for the release of ribosomes from messenger RNA at the termination of protein biosynthesis. May increase the efficiency of translation by recycling ribosomes from one round of translation to another. The sequence is that of Ribosome-recycling factor from Pelobacter propionicus (strain DSM 2379 / NBRC 103807 / OttBd1).